The sequence spans 541 residues: uncharacterized protein (541 aa).

A signal peptide (tat-type signal) is located at residues 1–55 (MTKTVTRAGGASGPQQFQSGGETMKYEITRRRFLAASSAVLAAPAIVTMVRPARA). Residues 339 to 362 (RRSPSGISSPRSNRQPKAEALSAR) form a disordered region. Residues 341–351 (SPSGISSPRSN) are compositionally biased toward low complexity. 4 helical membrane passes run 379-399 (AIVW…MVFM), 420-440 (LPVL…AHSG), 466-486 (LVSA…GEIA), and 500-520 (VGYF…LAVA).

Belongs to the bacterial solute-binding protein 7 family. Post-translationally, predicted to be exported by the Tat system. The position of the signal peptide cleavage has not been experimentally proven.

The protein localises to the cell membrane. This is an uncharacterized protein from Sinorhizobium fredii (strain NBRC 101917 / NGR234).